Consider the following 109-residue polypeptide: uncharacterized protein (109 aa).

The next 2 membrane-spanning stretches (helical) occupy residues 24–44 (SLGI…SAFV) and 68–88 (VIVL…SIFI).

The protein localises to the membrane. This is an uncharacterized protein from Saccharomyces cerevisiae (strain ATCC 204508 / S288c) (Baker's yeast).